We begin with the raw amino-acid sequence, 626 residues long: Chaperone protein DnaK (626 aa).

Threonine 175 is subject to Phosphothreonine; by autocatalysis. Disordered stretches follow at residues 469–488 (DKGT…GLPK), 498–517 (AEAH…TRNQ), and 583–626 (AQQG…KDNK). Residues 498–516 (AEAHEAEDKKRKEDAETRN) show a composition bias toward basic and acidic residues. The segment covering 609–626 (SDDDVVDAEVVDDDKDNK) has biased composition (acidic residues).

It belongs to the heat shock protein 70 family.

Acts as a chaperone. This chain is Chaperone protein DnaK, found in Bifidobacterium adolescentis (strain ATCC 15703 / DSM 20083 / NCTC 11814 / E194a).